A 343-amino-acid polypeptide reads, in one-letter code: Homeobox-leucine zipper protein HOX16 (343 aa).

The segment at residues 74 to 133 (LPEKKRRLTPEQVHLLERSFEEENKLEPERKTELARKLGLQPRQVAVWFQNRRARWKTKQ) is a DNA-binding region (homeobox). Residues 132-176 (KQLERDFDRLKASFDALRADHDALLQDNHRLHSQVMSLTEKLQEK) are leucine-zipper. Residues 218–239 (FEEQQEQQVKAEDRLSTGSGGS) form a disordered region.

This sequence belongs to the HD-ZIP homeobox family. Class I subfamily. Expressed in seedlings, stems, leaf sheaths and blades and panicles.

The protein localises to the nucleus. Probable transcription factor. The polypeptide is Homeobox-leucine zipper protein HOX16 (HOX16) (Oryza sativa subsp. japonica (Rice)).